The chain runs to 372 residues: Cytochrome b (372 aa).

A run of 4 helical transmembrane segments spans residues 25-45, 69-90, 105-125, and 170-190; these read FGSMLLTCLALQTMTGFFLAI, WMMQNLHAIGASMFFICIYIHI, WLSGTTLLIILMATAFFGYVL, and FFALHFILPFTIISMSSIHIM. Residues His-75 and His-89 each contribute to the heme b site. His-174 and His-188 together coordinate heme b. His-193 contributes to the a ubiquinone binding site. A run of 4 helical transmembrane segments spans residues 218 to 238, 280 to 300, 312 to 332, and 339 to 358; these read HKDMLMLTIMMTALFIIMSFN, LGGAVALVLSVTILMTMPFTH, LMQFMFWTLVTTFIMITWAAT, and FTTIGQVTSILYFTFFIMNP.

Belongs to the cytochrome b family. As to quaternary structure, the cytochrome bc1 complex contains 3 respiratory subunits (MT-CYB, CYC1 and UQCRFS1), 2 core proteins (UQCRC1 and UQCRC2) and probably 6 low-molecular weight proteins. Heme b is required as a cofactor.

It is found in the mitochondrion inner membrane. Its function is as follows. Component of the ubiquinol-cytochrome c reductase complex (complex III or cytochrome b-c1 complex) that is part of the mitochondrial respiratory chain. The b-c1 complex mediates electron transfer from ubiquinol to cytochrome c. Contributes to the generation of a proton gradient across the mitochondrial membrane that is then used for ATP synthesis. The sequence is that of Cytochrome b (MT-CYB) from Pantherophis bairdi (Baird's ratsnake).